The following is a 140-amino-acid chain: uncharacterized protein (140 aa).

Residue 18–25 coordinates ATP; it reads GTNGSGKS.

This is an uncharacterized protein from Haemophilus influenzae (strain ATCC 51907 / DSM 11121 / KW20 / Rd).